Consider the following 242-residue polypeptide: Venom nerve growth factor 1 (242 aa).

The N-terminal stretch at 1 to 18 is a signal peptide; sequence MSMLCYTLIIAFLIGIWA. Residues 19 to 125 constitute a propeptide that is removed on maturation; sequence APQSEDNVPL…ALNRNIQAKR (107 aa). 3 disulfide bridges follow: Cys-139/Cys-203, Cys-181/Cys-231, and Cys-191/Cys-233.

This sequence belongs to the NGF-beta family. Homodimer; non-covalently linked. As to expression, expressed by the venom gland.

It is found in the secreted. In terms of biological role, nerve growth factor is important for the development and maintenance of the sympathetic and sensory nervous systems. It stimulates division and differentiation of sympathetic and embryonic sensory neurons as well as basal forebrain cholinergic neurons in the brain. Its relevance in the snake venom is not clear. However, it has been shown to inhibit metalloproteinase-dependent proteolysis of platelet glycoprotein Ib alpha, suggesting a metalloproteinase inhibition to prevent metalloprotease autodigestion and/or protection against prey proteases. Binds a lipid between the two protein chains in the homodimer. The lipid-bound form promotes histamine relase from mouse mast cells, contrary to the lipid-free form. The polypeptide is Venom nerve growth factor 1 (Pseudechis australis (Mulga snake)).